A 229-amino-acid chain; its full sequence is Translation initiation factor IF-3 (229 aa).

Disordered stretches follow at residues 1–21 and 184–229; these read MAIQQRDSRGGTNRDARTNRR and QAQR…AGPR. A compositionally biased stretch (low complexity) spans 192-203; that stretch reads AAAQAAPAAAPQ. Residues 204–221 are compositionally biased toward pro residues; the sequence is PGAPAAPPAAPAPAPAPE.

This sequence belongs to the IF-3 family. As to quaternary structure, monomer.

It localises to the cytoplasm. IF-3 binds to the 30S ribosomal subunit and shifts the equilibrium between 70S ribosomes and their 50S and 30S subunits in favor of the free subunits, thus enhancing the availability of 30S subunits on which protein synthesis initiation begins. The sequence is that of Translation initiation factor IF-3 from Anaeromyxobacter sp. (strain Fw109-5).